Reading from the N-terminus, the 245-residue chain is MANRPQALKIHPQPVLAPGELDSVRRQLAAASAQERVRWGLARFPGRIVLASSFGAQAAVSLHLVTREQPDIPVVLVDTGYLFPETYRFVDELTERLGLNLQVARPAHSAAWQEARFGRLWEQGVEGIERYNRMNKVEPMQQALETLGADAWFAGLRRQQAHSRQQRQVVEIQNDRVKVHPIIDWTDRDVHRYLTRHDLPYHPLWHEGYVSIGDVHTTRRLADGMSEEETRFFGLRRECGLHDLV.

Cys239 functions as the Nucleophile; cysteine thiosulfonate intermediate in the catalytic mechanism.

This sequence belongs to the PAPS reductase family. CysH subfamily.

It is found in the cytoplasm. It catalyses the reaction [thioredoxin]-disulfide + sulfite + adenosine 3',5'-bisphosphate + 2 H(+) = [thioredoxin]-dithiol + 3'-phosphoadenylyl sulfate. It functions in the pathway sulfur metabolism; hydrogen sulfide biosynthesis; sulfite from sulfate: step 3/3. In terms of biological role, catalyzes the formation of sulfite from phosphoadenosine 5'-phosphosulfate (PAPS) using thioredoxin as an electron donor. In Alkalilimnicola ehrlichii (strain ATCC BAA-1101 / DSM 17681 / MLHE-1), this protein is Phosphoadenosine 5'-phosphosulfate reductase.